We begin with the raw amino-acid sequence, 305 residues long: Ribonuclease BN (305 aa).

Residues histidine 63, histidine 65, aspartate 67, histidine 68, histidine 141, aspartate 212, and histidine 270 each contribute to the Zn(2+) site. The active-site Proton acceptor is the aspartate 67.

This sequence belongs to the RNase Z family. RNase BN subfamily. As to quaternary structure, homodimer. The cofactor is Zn(2+).

In terms of biological role, zinc phosphodiesterase, which has both exoribonuclease and endoribonuclease activities. The sequence is that of Ribonuclease BN from Proteus mirabilis (strain HI4320).